The primary structure comprises 535 residues: Beta-amylase 1, chloroplastic (535 aa).

Residues 1–36 constitute a chloroplast transit peptide; it reads MALNLAQSAAAAACFATAGDARRAASVVAMPSSSSS. Residues aspartate 115, histidine 155, and aspartate 163 each contribute to the substrate site. Glutamate 247 functions as the Proton donor in the catalytic mechanism. Lysine 361, histidine 366, and threonine 408 together coordinate substrate. Glutamate 446 (proton acceptor) is an active-site residue. Substrate contacts are provided by residues 447–448 and arginine 480; that span reads NA.

This sequence belongs to the glycosyl hydrolase 14 family.

It is found in the plastid. It localises to the chloroplast. It catalyses the reaction Hydrolysis of (1-&gt;4)-alpha-D-glucosidic linkages in polysaccharides so as to remove successive maltose units from the non-reducing ends of the chains.. Functionally, possesses beta-amylase activity in vitro. May be involved in cold resistance by mediating the accumulation of maltose upon freezing stress, thus contributing to the protection of membranes. This chain is Beta-amylase 1, chloroplastic, found in Oryza sativa subsp. japonica (Rice).